The sequence spans 181 residues: ATP-dependent protease subunit HslV (181 aa).

Residue Thr-11 is part of the active site. The Na(+) site is built by Ala-166, Cys-169, and Thr-172.

It belongs to the peptidase T1B family. HslV subfamily. As to quaternary structure, a double ring-shaped homohexamer of HslV is capped on each side by a ring-shaped HslU homohexamer. The assembly of the HslU/HslV complex is dependent on binding of ATP.

Its subcellular location is the cytoplasm. The enzyme catalyses ATP-dependent cleavage of peptide bonds with broad specificity.. Its activity is regulated as follows. Allosterically activated by HslU binding. Functionally, protease subunit of a proteasome-like degradation complex believed to be a general protein degrading machinery. The sequence is that of ATP-dependent protease subunit HslV from Chlorobaculum tepidum (strain ATCC 49652 / DSM 12025 / NBRC 103806 / TLS) (Chlorobium tepidum).